The primary structure comprises 284 residues: Nucleotide-binding protein TTE1834 (284 aa).

8-15 provides a ligand contact to ATP; that stretch reads GLSGAGKT. 58–61 contacts GTP; that stretch reads DLRG.

Belongs to the RapZ-like family.

Functionally, displays ATPase and GTPase activities. The sequence is that of Nucleotide-binding protein TTE1834 from Caldanaerobacter subterraneus subsp. tengcongensis (strain DSM 15242 / JCM 11007 / NBRC 100824 / MB4) (Thermoanaerobacter tengcongensis).